We begin with the raw amino-acid sequence, 136 residues long: Holo-[acyl-carrier-protein] synthase (136 aa).

Mg(2+) contacts are provided by D8 and E57.

The protein belongs to the P-Pant transferase superfamily. AcpS family. Requires Mg(2+) as cofactor.

Its subcellular location is the cytoplasm. The catalysed reaction is apo-[ACP] + CoA = holo-[ACP] + adenosine 3',5'-bisphosphate + H(+). Functionally, transfers the 4'-phosphopantetheine moiety from coenzyme A to a Ser of acyl-carrier-protein. The protein is Holo-[acyl-carrier-protein] synthase of Azorhizobium caulinodans (strain ATCC 43989 / DSM 5975 / JCM 20966 / LMG 6465 / NBRC 14845 / NCIMB 13405 / ORS 571).